A 312-amino-acid chain; its full sequence is Tyrosine recombinase XerC (312 aa).

Residues 1 to 103 (MIASIYSFLD…SIKSFAHYCV (103 aa)) enclose the Core-binding (CB) domain. The Tyr recombinase domain occupies 124-306 (ELPSPMTYAQ…SVKLKKQTHQ (183 aa)). Active-site residues include R164, K188, H258, R261, and H284. Y293 (O-(3'-phospho-DNA)-tyrosine intermediate) is an active-site residue.

The protein belongs to the 'phage' integrase family. XerC subfamily. In terms of assembly, forms a cyclic heterotetrameric complex composed of two molecules of XerC and two molecules of XerD.

It localises to the cytoplasm. Site-specific tyrosine recombinase, which acts by catalyzing the cutting and rejoining of the recombining DNA molecules. The XerC-XerD complex is essential to convert dimers of the bacterial chromosome into monomers to permit their segregation at cell division. It also contributes to the segregational stability of plasmids. In Chlamydia pneumoniae (Chlamydophila pneumoniae), this protein is Tyrosine recombinase XerC.